The sequence spans 330 residues: Cytosolic iron-sulfur protein assembly protein 1 (330 aa).

7 WD repeats span residues 12–53, 56–95, 105–144, 151–190, 195–236, 248–286, and 292–330; these read LYKE…DVLD, AHKK…DRTF, GHEN…EEYE, EHSQ…WECV, GHEG…EDDQ, VHKR…WKVF, and CHGV…EKAA.

The protein belongs to the WD repeat CIA1 family. Interacts with NAR1.

It localises to the cytoplasm. Its subcellular location is the nucleus. In terms of biological role, essential component of the cytosolic iron-sulfur (Fe/S) protein assembly machinery. Required for the maturation of extramitochondrial Fe/S proteins. In Saccharomyces cerevisiae (strain ATCC 204508 / S288c) (Baker's yeast), this protein is Cytosolic iron-sulfur protein assembly protein 1.